The primary structure comprises 100 residues: Small cysteine and glycine repeat-containing protein 3 (100 aa).

A 13 X 2 AA repeats of CG region spans residues 4–82; sequence CGCGSCGGCG…RRTCRSCGCG (79 aa).

It belongs to the KRTAP type 28 family.

In terms of biological role, in the hair cortex, hair keratin intermediate filaments are embedded in an interfilamentous matrix, consisting of hair keratin-associated proteins (KRTAP), which are essential for the formation of a rigid and resistant hair shaft through their extensive disulfide bond cross-linking with abundant cysteine residues of hair keratins. The matrix proteins include the high-sulfur and high-glycine-tyrosine keratins. The protein is Small cysteine and glycine repeat-containing protein 3 of Homo sapiens (Human).